We begin with the raw amino-acid sequence, 614 residues long: Glucose oxidase 1 (614 aa).

An N-terminal signal peptide occupies residues methionine 1–alanine 15. FAD contacts are provided by leucine 52, threonine 53, and glutamate 73. An N-linked (GlcNAc...) asparagine glycan is attached at asparagine 112. The tract at residues isoleucine 117–arginine 136 is disordered. The FAD site is built by serine 126, asparagine 130, glycine 131, and serine 133. N-linked (GlcNAc...) asparagine glycans are attached at residues asparagine 184 and asparagine 191. A disulfide bridge links cysteine 187 with cysteine 229. Valine 273 contacts FAD. 3 N-linked (GlcNAc...) asparagine glycosylation sites follow: asparagine 279, asparagine 383, and asparagine 416. The Proton acceptor role is filled by histidine 544. Residues arginine 565 and valine 566 each coordinate O2. The FAD site is built by glycine 577 and methionine 589.

This sequence belongs to the GMC oxidoreductase family. As to quaternary structure, homodimer. The cofactor is FAD.

The protein resides in the secreted. Its subcellular location is the cell wall. It localises to the cytoplasm. The protein localises to the extracellular space. It is found in the extracellular matrix. The catalysed reaction is beta-D-glucose + O2 = D-glucono-1,5-lactone + H2O2. Its function is as follows. Glucose oxidase catalyzes the oxidation of beta-D-glucose to D-glucono-delta-lactone and hydrogen peroxide in the presence of molecular oxygen. This Penicillium expansum (Blue mold rot fungus) protein is Glucose oxidase 1.